The sequence spans 309 residues: Replication factor C subunit 4 (309 aa).

Residues V5, V17, 42–50, N134, and R192 contribute to the ATP site; that span reads GPPGTGKTT.

The protein belongs to the activator 1 small subunits family. In terms of assembly, component of the replication factor C (RFC) complex.

Its subcellular location is the nucleus. Its function is as follows. Component of ATP-dependent clamp loader (RFC and RFC-like) complexes for DNA clamps. During a clamp loading circle, the RFC:clamp complex binds to DNA and the recognition of the double-stranded/single-stranded junction stimulates ATP hydrolysis by RFC. The complex presumably provides bipartite ATP sites in which one subunit supplies a catalytic site for hydrolysis of ATP bound to the neighboring subunit. Dissociation of RFC from the clamp leaves the clamp encircling DNA. Component of the replication factor C (RFC or activator 1) complex which acts during elongation of primed DNA templates by DNA polymerase delta and epsilon. RFC has an essential but redundant activity in sister chromatid cohesion establishment. In Encephalitozoon cuniculi (strain GB-M1) (Microsporidian parasite), this protein is Replication factor C subunit 4 (RFC4).